The following is a 900-amino-acid chain: Bifunctional uridylyltransferase/uridylyl-removing enzyme (900 aa).

The segment at 1-342 (MPQVDPELFD…PCEQPVQIQP (342 aa)) is uridylyltransferase. The segment at 343–705 (LNSRFQLRDG…TTQREFESGS (363 aa)) is uridylyl-removing. The HD domain maps to 461-583 (VDAHTLNLIK…VGDQTHLDYL (123 aa)). ACT domains lie at 706 to 789 (QIFI…IIQR) and 816 to 891 (VLEV…DNGR).

It belongs to the GlnD family. Requires Mg(2+) as cofactor.

The catalysed reaction is [protein-PII]-L-tyrosine + UTP = [protein-PII]-uridylyl-L-tyrosine + diphosphate. It catalyses the reaction [protein-PII]-uridylyl-L-tyrosine + H2O = [protein-PII]-L-tyrosine + UMP + H(+). Its activity is regulated as follows. Uridylyltransferase (UTase) activity is inhibited by glutamine, while glutamine activates uridylyl-removing (UR) activity. Its function is as follows. Modifies, by uridylylation and deuridylylation, the PII regulatory proteins (GlnB and homologs), in response to the nitrogen status of the cell that GlnD senses through the glutamine level. Under low glutamine levels, catalyzes the conversion of the PII proteins and UTP to PII-UMP and PPi, while under higher glutamine levels, GlnD hydrolyzes PII-UMP to PII and UMP (deuridylylation). Thus, controls uridylylation state and activity of the PII proteins, and plays an important role in the regulation of nitrogen assimilation and metabolism. The sequence is that of Bifunctional uridylyltransferase/uridylyl-removing enzyme from Pseudomonas aeruginosa (strain ATCC 15692 / DSM 22644 / CIP 104116 / JCM 14847 / LMG 12228 / 1C / PRS 101 / PAO1).